The primary structure comprises 288 residues: MRLSIIEIINSMFSIRLFSPAKINLFLKVIGKRADGYHELSSLFQTISAGDILTFQRQTIDTLTCSDPYLPTDDSNLVLKAMRLFRSKTGLDLHLRIHLDKRLPSQAGLGGGSSNAATTLWACNQLAGEIVTTEELMQWGSEIGADIPFFFSKGTAHCTGRGECVNSLEPLAHCKIWIVKPPFGLSTPEVYKHLNFSQPNENNNDYASFKEKPYFNDLEASAFEIKPELKILKNTLLSSGFDTVLMSGSGSSFFCIGQGQIPASFKAFSAYFINRSSNRWYSTLPKLT.

Lysine 22 is a catalytic residue. 104–114 is a binding site for ATP; it reads PSQAGLGGGSS. Aspartate 146 is a catalytic residue.

Belongs to the GHMP kinase family. IspE subfamily.

The catalysed reaction is 4-CDP-2-C-methyl-D-erythritol + ATP = 4-CDP-2-C-methyl-D-erythritol 2-phosphate + ADP + H(+). Its pathway is isoprenoid biosynthesis; isopentenyl diphosphate biosynthesis via DXP pathway; isopentenyl diphosphate from 1-deoxy-D-xylulose 5-phosphate: step 3/6. Catalyzes the phosphorylation of the position 2 hydroxy group of 4-diphosphocytidyl-2C-methyl-D-erythritol. In Protochlamydia amoebophila (strain UWE25), this protein is 4-diphosphocytidyl-2-C-methyl-D-erythritol kinase.